Reading from the N-terminus, the 384-residue chain is Secreted effector protein EspF(U) (384 aa).

A run of 6 repeats spans residues 96-142, 143-189, 190-236, 237-283, 284-330, and 331-377. The tract at residues 96-377 is 6 X 48 AA approximate tandem repeats; that stretch reads IXPARSMAEH…RLMQHLAEHG (282 aa). Positions 247-266 are disordered; the sequence is IPPAPNWPAPPPPVQNEQSR. A compositionally biased stretch (pro residues) spans 248–260; it reads PPAPNWPAPPPPV.

Belongs to the EspF(U)/TccP family. Interacts with host BAIAP2 and host WASL/N-WASP. Can also interact with host proteins BAIAP2L1 and WAS/WASP.

It is found in the secreted. It localises to the host cytoplasm. Required for efficient pedestal formation in host epithelial cells during infection. Acts as an intermediate between Tir (via host BAIAP2) and host WASL/N-WASP. Directly binds and activates WASL/N-WASP, which stimulates actin polymerization and leads to the formation of actin pedestals at the sites of bacterial adhesion. This chain is Secreted effector protein EspF(U) (espF(U)), found in Escherichia coli O157:H7.